The chain runs to 270 residues: 3-methyl-2-oxobutanoate hydroxymethyltransferase (270 aa).

Mg(2+)-binding residues include D43 and D82. Residues 43-44, D82, and K112 contribute to the 3-methyl-2-oxobutanoate site; that span reads DS. Mg(2+) is bound at residue E114. The active-site Proton acceptor is E179.

Belongs to the PanB family. In terms of assembly, homodecamer; pentamer of dimers. Mg(2+) is required as a cofactor.

The protein resides in the cytoplasm. The catalysed reaction is 3-methyl-2-oxobutanoate + (6R)-5,10-methylene-5,6,7,8-tetrahydrofolate + H2O = 2-dehydropantoate + (6S)-5,6,7,8-tetrahydrofolate. It participates in cofactor biosynthesis; (R)-pantothenate biosynthesis; (R)-pantoate from 3-methyl-2-oxobutanoate: step 1/2. In terms of biological role, catalyzes the reversible reaction in which hydroxymethyl group from 5,10-methylenetetrahydrofolate is transferred onto alpha-ketoisovalerate to form ketopantoate. This is 3-methyl-2-oxobutanoate hydroxymethyltransferase from Staphylococcus saprophyticus subsp. saprophyticus (strain ATCC 15305 / DSM 20229 / NCIMB 8711 / NCTC 7292 / S-41).